Here is a 268-residue protein sequence, read N- to C-terminus: Tryptophan synthase alpha chain (268 aa).

Residues Glu-49 and Asp-60 each act as proton acceptor in the active site.

It belongs to the TrpA family. As to quaternary structure, tetramer of two alpha and two beta chains.

It catalyses the reaction (1S,2R)-1-C-(indol-3-yl)glycerol 3-phosphate + L-serine = D-glyceraldehyde 3-phosphate + L-tryptophan + H2O. It participates in amino-acid biosynthesis; L-tryptophan biosynthesis; L-tryptophan from chorismate: step 5/5. Functionally, the alpha subunit is responsible for the aldol cleavage of indoleglycerol phosphate to indole and glyceraldehyde 3-phosphate. In Aliivibrio fischeri (strain MJ11) (Vibrio fischeri), this protein is Tryptophan synthase alpha chain.